The chain runs to 480 residues: DNA repair protein RadA (480 aa).

A C4-type zinc finger spans residues 10–27 (CSECRHVSAKWVGRCLEC). 95–102 (GDPGVGKS) is an ATP binding site. The RadA KNRFG motif signature appears at 254–258 (KNRFG). Residues 353–480 (DIYLSTVGGM…TGHVPLGRGT (128 aa)) are lon-protease-like. The disordered stretch occupies residues 459-480 (GTTLATPPSHSGTGHVPLGRGT). Residues 461–470 (TLATPPSHSG) are compositionally biased toward polar residues.

This sequence belongs to the RecA family. RadA subfamily.

Functionally, DNA-dependent ATPase involved in processing of recombination intermediates, plays a role in repairing DNA breaks. Stimulates the branch migration of RecA-mediated strand transfer reactions, allowing the 3' invading strand to extend heteroduplex DNA faster. Binds ssDNA in the presence of ADP but not other nucleotides, has ATPase activity that is stimulated by ssDNA and various branched DNA structures, but inhibited by SSB. Does not have RecA's homology-searching function. The protein is DNA repair protein RadA of Mycobacterium tuberculosis (strain CDC 1551 / Oshkosh).